Consider the following 282-residue polypeptide: Bis(5'-nucleosyl)-tetraphosphatase, symmetrical (282 aa).

The protein belongs to the Ap4A hydrolase family.

The catalysed reaction is P(1),P(4)-bis(5'-adenosyl) tetraphosphate + H2O = 2 ADP + 2 H(+). In terms of biological role, hydrolyzes diadenosine 5',5'''-P1,P4-tetraphosphate to yield ADP. The chain is Bis(5'-nucleosyl)-tetraphosphatase, symmetrical from Salmonella paratyphi C (strain RKS4594).